The sequence spans 293 residues: Probable endonuclease 4 (293 aa).

Residues H77, H118, E153, D187, H190, H221, D234, H236, and E266 each coordinate Zn(2+).

The protein belongs to the AP endonuclease 2 family. Zn(2+) is required as a cofactor.

The catalysed reaction is Endonucleolytic cleavage to 5'-phosphooligonucleotide end-products.. Endonuclease IV plays a role in DNA repair. It cleaves phosphodiester bonds at apurinic or apyrimidinic (AP) sites, generating a 3'-hydroxyl group and a 5'-terminal sugar phosphate. The sequence is that of Probable endonuclease 4 from Mesoplasma florum (strain ATCC 33453 / NBRC 100688 / NCTC 11704 / L1) (Acholeplasma florum).